Here is a 578-residue protein sequence, read N- to C-terminus: Protein BONZAI 1 (578 aa).

A lipid anchor (N-myristoyl glycine) is attached at Gly2. 2 C2 domains span residues 26 to 163 (ALGA…TSTL) and 176 to 303 (QPHH…NFSL). Residues Asp63, Asp69, Asp122, and Asp124 each contribute to the Ca(2+) site. The VWFA domain occupies 341–560 (NFMVAIDFTA…SVVQALLAEL (220 aa)).

The protein belongs to the copine family. As to quaternary structure, interacts (via VWA domain) with BAP1 and BAP2. Interacts with HSP70-1 and HSP70-2. Requires Ca(2+) as cofactor. In terms of processing, based on mass spectrometry analysis, the N-peptide must be modified and there might be additional modifications other than myristoylation. As to expression, expressed in roots and flowers and, at higher levels, in leaves and stems. Strongly expressed in growing tissues. Not detected in green siliques.

The protein resides in the cell membrane. Functionally, negative regulator of cell death and defense responses. Negative regulator of several R genes, including SNC1. May have effects in promoting growth and development. May function in membrane trafficking and in fusion of vesicles with plasma membrane at low temperature. Exhibits calcium-dependent phospholipid binding properties. In Arabidopsis thaliana (Mouse-ear cress), this protein is Protein BONZAI 1 (BON1).